The sequence spans 322 residues: Tyrosine recombinase XerC (322 aa).

The Core-binding (CB) domain maps to 14 to 104 (PDLREAAAAW…ALRSFARHLD (91 aa)). The 187-residue stretch at 125-311 (RLPRPLPVAA…DSARLLSAFD (187 aa)) folds into the Tyr recombinase domain. Catalysis depends on residues Arg-170, Lys-195, His-263, Arg-266, and His-289. The active-site O-(3'-phospho-DNA)-tyrosine intermediate is the Tyr-298.

It belongs to the 'phage' integrase family. XerC subfamily. Forms a cyclic heterotetrameric complex composed of two molecules of XerC and two molecules of XerD.

The protein localises to the cytoplasm. Functionally, site-specific tyrosine recombinase, which acts by catalyzing the cutting and rejoining of the recombining DNA molecules. The XerC-XerD complex is essential to convert dimers of the bacterial chromosome into monomers to permit their segregation at cell division. It also contributes to the segregational stability of plasmids. The protein is Tyrosine recombinase XerC of Methylobacterium nodulans (strain LMG 21967 / CNCM I-2342 / ORS 2060).